Consider the following 204-residue polypeptide: Probable chorismate pyruvate-lyase (204 aa).

3 residues coordinate substrate: R75, L113, and E160.

This sequence belongs to the UbiC family.

It is found in the cytoplasm. The enzyme catalyses chorismate = 4-hydroxybenzoate + pyruvate. Its pathway is cofactor biosynthesis; ubiquinone biosynthesis. Functionally, removes the pyruvyl group from chorismate, with concomitant aromatization of the ring, to provide 4-hydroxybenzoate (4HB) for the ubiquinone pathway. This Alcanivorax borkumensis (strain ATCC 700651 / DSM 11573 / NCIMB 13689 / SK2) protein is Probable chorismate pyruvate-lyase.